Consider the following 595-residue polypeptide: MRSDYCGTLRSEHIGKTVSLYGWIDGWRDHGGVIFLDLRDYTGIVQIVADPQRTPESYHLASSLRNEYVVRVEGRVSARPEHSLNPRLSTGTVEVYADTLAVLNRAETPPFAISKDEEVDEKLRLKFRYLDLRRGRMQKLLRLRHRVMQIMRRHLDERGFTEIETPVLVKSTPEGARDYLVPSRVNPGDWFALPQSPQLFKQLLMVAGFDRYYQIARCFRDEDLRADRQPEFTQLDMEMSFLSMEEIIALNEGLVAAILQETMGLELSLPLPRLTYAEAMVRYGSDKPDTRFGLELVEVSEVFRESSFQVLSGAVAAGGKVVCLPVPGAEGITNTRVKPGGDLFEFVTQFGARGLLFARVREGGQVDTIGAFSKSLTPEIAAGMIEKTGAQPGHLLLFGAGDRTAVPTVLDYMGRLRLKMGEELGLIDPNRHNLLWVTDFPMFEWNAEEKRLEALHHPFTAPRPEDEHDLKTARALAYDIIWNGVEVGGGSLRIYRRALQERVFETIGLTEEEARAKFGFLLDAFEYGTPPHGGIAYGFDRFVMLIAGEQSIREVIAFPKTQRAQDLMLGAPSAVAERQLKELNVRSTLPPKTQG.

An L-aspartate-binding site is contributed by glutamate 174. Residues 198–201 (QLFK) form an aspartate region. L-aspartate is bound at residue arginine 220. ATP-binding positions include 220-222 (RDE) and glutamine 229. Position 456 (histidine 456) interacts with L-aspartate. Glutamate 486 provides a ligand contact to ATP. Residue arginine 493 participates in L-aspartate binding. Residue 538–541 (GFDR) coordinates ATP.

Belongs to the class-II aminoacyl-tRNA synthetase family. Type 1 subfamily. As to quaternary structure, homodimer.

Its subcellular location is the cytoplasm. It catalyses the reaction tRNA(Asx) + L-aspartate + ATP = L-aspartyl-tRNA(Asx) + AMP + diphosphate. In terms of biological role, aspartyl-tRNA synthetase with relaxed tRNA specificity since it is able to aspartylate not only its cognate tRNA(Asp) but also tRNA(Asn). Reaction proceeds in two steps: L-aspartate is first activated by ATP to form Asp-AMP and then transferred to the acceptor end of tRNA(Asp/Asn). The sequence is that of Aspartate--tRNA(Asp/Asn) ligase from Gloeobacter violaceus (strain ATCC 29082 / PCC 7421).